The following is a 265-amino-acid chain: Small ribosomal subunit protein uS3 (265 aa).

Positions 39 to 107 (VRDFLKKKLK…PVHVNIEEIR (69 aa)) constitute a KH type-2 domain. Residues 211 to 265 (NDAPVVEEPQDDRRRRPGRPEGRRREGEGRPGGNRRGGAGAGRRAAPGADAKSGE) are disordered. Residues 221–239 (DDRRRRPGRPEGRRREGEG) are compositionally biased toward basic and acidic residues. Over residues 240–251 (RPGGNRRGGAGA) the composition is skewed to gly residues.

The protein belongs to the universal ribosomal protein uS3 family. In terms of assembly, part of the 30S ribosomal subunit. Forms a tight complex with proteins S10 and S14.

Functionally, binds the lower part of the 30S subunit head. Binds mRNA in the 70S ribosome, positioning it for translation. This is Small ribosomal subunit protein uS3 from Cupriavidus necator (strain ATCC 17699 / DSM 428 / KCTC 22496 / NCIMB 10442 / H16 / Stanier 337) (Ralstonia eutropha).